Here is a 315-residue protein sequence, read N- to C-terminus: Deoxyhypusine hydroxylase (315 aa).

HEAT-like PBS-type repeat units lie at residues I23–K52, L56–N82, V89–D115, N179–D205, L211–D237, and V244–D270. Positions 58, 91, and 92 each coordinate Fe cation. 3 residues coordinate Fe cation: H213, H246, and E247.

Belongs to the deoxyhypusine hydroxylase family. Fe(2+) serves as cofactor.

The enzyme catalyses [eIF5A protein]-deoxyhypusine + AH2 + O2 = [eIF5A protein]-hypusine + A + H2O. The protein operates within protein modification; eIF5A hypusination. Functionally, catalyzes the hydroxylation of the N(6)-(4-aminobutyl)-L-lysine intermediate produced by deoxyhypusine synthase/DHPS on a critical lysine of the eukaryotic translation initiation factor 5A/eIF-5A. This is the second step of the post-translational modification of that lysine into an unusual amino acid residue named hypusine. Hypusination is unique to mature eIF-5A factor and is essential for its function. The sequence is that of Deoxyhypusine hydroxylase (dohh-1) from Dictyostelium discoideum (Social amoeba).